The chain runs to 211 residues: Arginine exporter protein ArgO (211 aa).

6 helical membrane-spanning segments follow: residues 1-21, 37-57, 68-88, 111-131, 147-167, and 179-199; these read MISY…PLGP, LMIA…GIFG, LLAL…FGAL, IIAT…DTFV, WFAL…ALLA, and AQRI…FQLA.

This sequence belongs to the LysE/ArgO transporter (TC 2.A.75) family.

It is found in the cell inner membrane. The catalysed reaction is L-arginine(in) = L-arginine(out). Involved in the export of arginine. Important to control the intracellular level of arginine and the correct balance between arginine and lysine. The chain is Arginine exporter protein ArgO from Salmonella schwarzengrund (strain CVM19633).